The chain runs to 497 residues: Cysteine desulfurase, mitochondrial (497 aa).

The N-terminal 33 residues, 1-33 (MLKSTATRSITRLSQVYNVPAATYRACLVSRRF), are a transit peptide targeting the mitochondrion. Residues 168–169 (AT), asparagine 248, glutamine 276, and 296–298 (SSH) each bind pyridoxal 5'-phosphate. At lysine 299 the chain carries N6-(pyridoxal phosphate)lysine. Pyridoxal 5'-phosphate is bound at residue threonine 336. Cysteine 421 serves as the catalytic Cysteine persulfide intermediate. [2Fe-2S] cluster is bound at residue cysteine 421.

This sequence belongs to the class-V pyridoxal-phosphate-dependent aminotransferase family. NifS/IscS subfamily. Requires pyridoxal 5'-phosphate as cofactor.

The protein resides in the mitochondrion. The catalysed reaction is (sulfur carrier)-H + L-cysteine = (sulfur carrier)-SH + L-alanine. Catalyzes the removal of elemental sulfur from cysteine to produce alanine. It supplies the inorganic sulfur for iron-sulfur (Fe-S) clusters. Plays a role in both tRNA-processing and mitochondrial metabolism. Involved in the 2-thio-modification of both 5-carboxymethylaminomethyl-2-thiouridine in mitochondrial tRNAs and 5-methoxycarbonylmethyl-2-thiouridine (mcm5s2U) in cytoplasmic tRNAs. This Saccharomyces cerevisiae (strain ATCC 204508 / S288c) (Baker's yeast) protein is Cysteine desulfurase, mitochondrial.